Here is a 203-residue protein sequence, read N- to C-terminus: Probable cytochrome c oxidase subunit 3 (203 aa).

The next 5 membrane-spanning stretches (helical) occupy residues 30–50, 70–90, 102–122, 142–162, and 179–199; these read IVWLSSELMFFAGLFAMYFTA, AVPVTLVLIASSFTCQMGVFA, WYVITFLMGLFFVLGQGYEYY, LATGFHDLHVTGGLVAFIFLL, and IVVSYYWHFVDIVWIALFTVI.

This sequence belongs to the cytochrome c oxidase subunit 3 family.

The protein localises to the cell membrane. It catalyses the reaction 4 Fe(II)-[cytochrome c] + O2 + 8 H(+)(in) = 4 Fe(III)-[cytochrome c] + 2 H2O + 4 H(+)(out). In Mycolicibacterium paratuberculosis (strain ATCC BAA-968 / K-10) (Mycobacterium paratuberculosis), this protein is Probable cytochrome c oxidase subunit 3 (ctaE).